The chain runs to 440 residues: Ribosomal protein uS12 methylthiotransferase RimO (440 aa).

The 111-residue stretch at 5 to 115 (PTVGFVSLGC…VVNAVHEVVP (111 aa)) folds into the MTTase N-terminal domain. [4Fe-4S] cluster-binding residues include cysteine 14, cysteine 50, cysteine 79, cysteine 148, cysteine 152, and cysteine 155. The region spanning 134–372 (LTPRHYAYLK…MAHQQAISAA (239 aa)) is the Radical SAM core domain. The region spanning 375–440 (QLKVGKELDV…DEYDLWAEVI (66 aa)) is the TRAM domain.

Belongs to the methylthiotransferase family. RimO subfamily. Requires [4Fe-4S] cluster as cofactor.

The protein localises to the cytoplasm. It catalyses the reaction L-aspartate(89)-[ribosomal protein uS12]-hydrogen + (sulfur carrier)-SH + AH2 + 2 S-adenosyl-L-methionine = 3-methylsulfanyl-L-aspartate(89)-[ribosomal protein uS12]-hydrogen + (sulfur carrier)-H + 5'-deoxyadenosine + L-methionine + A + S-adenosyl-L-homocysteine + 2 H(+). Functionally, catalyzes the methylthiolation of an aspartic acid residue of ribosomal protein uS12. This is Ribosomal protein uS12 methylthiotransferase RimO from Stutzerimonas stutzeri (strain A1501) (Pseudomonas stutzeri).